We begin with the raw amino-acid sequence, 187 residues long: Elongation factor P (187 aa).

The protein belongs to the elongation factor P family.

It is found in the cytoplasm. The protein operates within protein biosynthesis; polypeptide chain elongation. Its function is as follows. Involved in peptide bond synthesis. Stimulates efficient translation and peptide-bond synthesis on native or reconstituted 70S ribosomes in vitro. Probably functions indirectly by altering the affinity of the ribosome for aminoacyl-tRNA, thus increasing their reactivity as acceptors for peptidyl transferase. This Treponema denticola (strain ATCC 35405 / DSM 14222 / CIP 103919 / JCM 8153 / KCTC 15104) protein is Elongation factor P.